Consider the following 203-residue polypeptide: ATP-dependent Clp protease proteolytic subunit 2 (203 aa).

Residue Ser-100 is the Nucleophile of the active site. Residue His-125 is part of the active site.

Belongs to the peptidase S14 family. In terms of assembly, fourteen ClpP subunits assemble into 2 heptameric rings which stack back to back to give a disk-like structure with a central cavity, resembling the structure of eukaryotic proteasomes.

The protein localises to the cytoplasm. The enzyme catalyses Hydrolysis of proteins to small peptides in the presence of ATP and magnesium. alpha-casein is the usual test substrate. In the absence of ATP, only oligopeptides shorter than five residues are hydrolyzed (such as succinyl-Leu-Tyr-|-NHMec, and Leu-Tyr-Leu-|-Tyr-Trp, in which cleavage of the -Tyr-|-Leu- and -Tyr-|-Trp bonds also occurs).. Its function is as follows. Cleaves peptides in various proteins in a process that requires ATP hydrolysis. Has a chymotrypsin-like activity. Plays a major role in the degradation of misfolded proteins. This is ATP-dependent Clp protease proteolytic subunit 2 from Nocardia farcinica (strain IFM 10152).